A 472-amino-acid polypeptide reads, in one-letter code: E3 ubiquitin-protein ligase MYLIP-A (472 aa).

The 279-residue stretch at 1–279 folds into the FERM domain; it reads MLCHVTRPDA…ETHAFYRCDT (279 aa). Residues 384–419 form an RING-type zinc finger; the sequence is CMLCCEEEIDAAFCPCGHMVCCQNCAAQLQSCPVCR.

As to quaternary structure, interacts with anxa5. Ubiquitous.

The protein localises to the cytoplasm. It localises to the cytosol. The catalysed reaction is S-ubiquitinyl-[E2 ubiquitin-conjugating enzyme]-L-cysteine + [acceptor protein]-L-lysine = [E2 ubiquitin-conjugating enzyme]-L-cysteine + N(6)-ubiquitinyl-[acceptor protein]-L-lysine.. The protein operates within protein modification; protein ubiquitination. Its function is as follows. E3 ubiquitin-protein ligase that mediates ubiquitination and subsequent proteasomal degradation of myosin regulatory light chain (MRLC). Regulates cell movements during gastrulation by acting downstream of fz7 to antagonize the frizzled-signaling pathway. The sequence is that of E3 ubiquitin-protein ligase MYLIP-A (mylipa) from Danio rerio (Zebrafish).